Reading from the N-terminus, the 214-residue chain is Adenylate kinase (214 aa).

Residue 10–15 (GAGKGT) coordinates ATP. The segment at 30–59 (STGDMLRAAIKAGTELGLNAKAVMDAGQLV) is NMP. Residues Thr-31, Arg-36, 57-59 (QLV), 85-88 (GFPR), and Gln-92 contribute to the AMP site. The tract at residues 122–159 (GRRVHSGSGRTYHVVFNPPKVEGKDDVTGEDLVIRADD) is LID. Residues Arg-123 and 132–133 (TY) each bind ATP. Arg-156 and Arg-167 together coordinate AMP. Gln-200 contacts ATP.

Belongs to the adenylate kinase family. As to quaternary structure, monomer.

It is found in the cytoplasm. The enzyme catalyses AMP + ATP = 2 ADP. It participates in purine metabolism; AMP biosynthesis via salvage pathway; AMP from ADP: step 1/1. Its function is as follows. Catalyzes the reversible transfer of the terminal phosphate group between ATP and AMP. Plays an important role in cellular energy homeostasis and in adenine nucleotide metabolism. The protein is Adenylate kinase of Aeromonas salmonicida (strain A449).